The chain runs to 175 residues: Shikimate kinase (175 aa).

14 to 19 (GAGKST) is a binding site for ATP. Ser18 contacts Mg(2+). Residues Asp36, Arg60, and Gly82 each coordinate substrate. Arg120 contributes to the ATP binding site. Position 140 (Arg140) interacts with substrate. An ATP-binding site is contributed by Gln157.

This sequence belongs to the shikimate kinase family. In terms of assembly, monomer. The cofactor is Mg(2+).

Its subcellular location is the cytoplasm. It carries out the reaction shikimate + ATP = 3-phosphoshikimate + ADP + H(+). It functions in the pathway metabolic intermediate biosynthesis; chorismate biosynthesis; chorismate from D-erythrose 4-phosphate and phosphoenolpyruvate: step 5/7. Catalyzes the specific phosphorylation of the 3-hydroxyl group of shikimic acid using ATP as a cosubstrate. The polypeptide is Shikimate kinase (Actinobacillus succinogenes (strain ATCC 55618 / DSM 22257 / CCUG 43843 / 130Z)).